The following is a 367-amino-acid chain: Gelsolin-like protein 1 (367 aa).

The interval 1-185 (MATGLIKAKE…GQKQQIYVHE (185 aa)) is actin binding. 2 Gelsolin-like repeats span residues 56-141 (NFKV…ELFR) and 179-225 (QQIY…KAMQ). Residues 106–109 (DEYG) are actin-actin interfilament contact point. Positions 186–295 (VPLVKERLDH…LKTTEVKRGA (110 aa)) are actin binding, Actin-severing. The tract at residues 235–257 (PKAEAETLEDESTPESHKFYTSL) is disordered. One copy of the Gelsolin-like 3 repeat lies at 287–322 (KTTEVKRGAVNSKDFSSNDVFILDTGDQCFVWVGKG). The actin-severing, Ca-sensitive stretch occupies residues 296–366 (VNSKDFSSND…LCKAFNVAIA (71 aa)).

It belongs to the villin/gelsolin family. Interacts with actin monomers and filaments. In terms of tissue distribution, expressed in circular and longitudinal muscle, pseudohearts, pharynx and gizzard. Also expressed in male germ cells at the proximal pole of primary spermatocytes in 16 cell-stage morulae, and in the distal parts of the spermatocytes in 32 and 64 cell-stage morulae. In the spermatids of the 128 cell-stage morulae it is expressed at the proximal pole of the elongated nucleus and the distal pole near the base of the flagellae.

Its subcellular location is the cytoplasm. It is found in the cytoskeleton. Its function is as follows. Calcium-regulated protein that binds to the plus (or barbed) ends of actin monomers or filaments, preventing monomer exchange (end-blocking or capping). Can promote the assembly of monomers into filaments (nucleation) as well as sever existing filaments. In Lumbricus terrestris (Common earthworm), this protein is Gelsolin-like protein 1.